A 268-amino-acid chain; its full sequence is Universal stress protein MT3220 (268 aa).

Residues Gly-13, Gly-107 to His-113, Arg-117, and Ser-120 to Val-121 contribute to the ATP site.

This sequence belongs to the universal stress protein A family.

The protein is Universal stress protein MT3220 of Mycobacterium tuberculosis (strain CDC 1551 / Oshkosh).